We begin with the raw amino-acid sequence, 332 residues long: rRNA biogenesis protein rrp-36 (332 aa).

4 disordered regions span residues 1–91, 104–196, 243–262, and 312–332; these read MPAV…ASQL, GALK…SGKS, SMESKKKARARKDKERELLS, and KKIAGKEKKALPLARRTAEDR. 3 stretches are compositionally biased toward acidic residues: residues 27–45, 53–77, and 117–127; these read EPDSDVEGSSDEAPSEEEG, DTEEEEEDEEIEEGSEPGSDDDSDA, and EDGSDDDEEKE. Basic and acidic residues-rich tracts occupy residues 128 to 142 and 165 to 183; these read EPNWKTEIEKGMKAK and RRRDFLANEPAKPKSRDPR. Positions 212–274 form a coiled coil; the sequence is DYQEDEMKQL…KKKEKELIKQ (63 aa). A compositionally biased stretch (basic and acidic residues) spans 315–332; the sequence is AGKEKKALPLARRTAEDR.

This sequence belongs to the RRP36 family. Associates with 90S and pre-40S pre-ribosomal particles.

The protein resides in the nucleus. It is found in the nucleolus. Its function is as follows. Component of the 90S pre-ribosome involved in the maturation of rRNAs. Required for early cleavages of the pre-RNAs in the 40S ribosomal subunit maturation pathway. The protein is rRNA biogenesis protein rrp-36 (rrp-36) of Neurospora crassa (strain ATCC 24698 / 74-OR23-1A / CBS 708.71 / DSM 1257 / FGSC 987).